Consider the following 279-residue polypeptide: uncharacterized protein (279 aa).

Residues 1-29 are compositionally biased toward low complexity; that stretch reads MSSRYTSSYTPSSRYGSGWDYSSSYSSSR. Disordered regions lie at residues 1 to 111 and 137 to 233; these read MSSR…APRE and LTLA…AEAL. A compositionally biased stretch (basic and acidic residues) spans 30–44; that stretch reads TSRDRDTGSYRDRDY. Over residues 45–59 the composition is skewed to low complexity; it reads SSTSYTSTRPRYSTY. The span at 142-153 shows a compositional bias: acidic residues; the sequence is EPEESEEEEDDE. Over residues 170-186 the composition is skewed to low complexity; it reads ESSPVSSPVKEVSSAAS. The span at 189 to 205 shows a compositional bias: polar residues; sequence ANDNGNETENRTPSPTV. Positions 221–233 are enriched in basic and acidic residues; the sequence is SDVKKEGGDAEAL.

This is an uncharacterized protein from Caenorhabditis elegans.